A 189-amino-acid chain; its full sequence is MTMISVNEFKNGLTIEYNNDLWRIVEFQHVKPGKGSAFVRSKLKSLRTGAVQEYTFRSTAKVNTADIQTKAMQYLYNDGTSFVFMDTNTYEQLEIPEAQVERESKFLKENMVVNVITHEGETLGVDLPNTVDLEVAETEPNIKGDTSSGGGKPATMETGLVVNVPFFINQGDVLTINTADGTYVSRANK.

Belongs to the elongation factor P family.

It localises to the cytoplasm. It functions in the pathway protein biosynthesis; polypeptide chain elongation. Its function is as follows. Involved in peptide bond synthesis. Stimulates efficient translation and peptide-bond synthesis on native or reconstituted 70S ribosomes in vitro. Probably functions indirectly by altering the affinity of the ribosome for aminoacyl-tRNA, thus increasing their reactivity as acceptors for peptidyl transferase. The sequence is that of Elongation factor P 2 (efp2) from Lactobacillus johnsonii (strain CNCM I-12250 / La1 / NCC 533).